A 2931-amino-acid chain; its full sequence is MGNLKNINLKEKGVAIVGIGFRIPSGNNENSISSPDDLFNNLKNGFDGVSSTSERWSDNFHKLGEISSPNAGLLPFKEWKSFDPLFFGINPSEAPLIDPQQRLLLKCTWEALEDASIDPISIRGTNTSVFIGSSTIDYLHTNKHQDSVLKNAIAQSTSAISNRISYCFDFNGPSLSIDTACSSSLNAVSQGYHSILNGTSNMSIVGGVNLILDVDIIKAYSILSMLSKTHGKCKTFDESGDGFTRGECVGVVVLKNLQDAVKDGNRIYCVINGSSSNVDGNGNMDKVNFYSPSKQSQFNNINSAFKSTNDKLSINDIQYIEAHGTGTKTGDPIETEAISMAFKNRDKSTPILIGSIKSNIGHCEAGSGVASLIKCCLMFKYQCFLPNIHFKNPNPLIKFNEWNLKVVTSPIPFNKRNNEKPVSMMINNFGVTGSNCCLLISEFKNNNNFKENINLESQSVNDRVLIPFSANSSNSLNQYQSKFKNIINNQFNFIDFTANQIYSKSNFLYQRSVVIASNSNELFENISNKKQIQTKNSIISNMSFKGKNPITIFVFSGQGSQYPKMALELYNNEVIFKKSIDLIDSKLSKYYGFSVWEKVKTIKDDDLTSIHDPIFAQPALCMISVSLFELYYHWGVNPSFILGHSLGEISASYCSGMIDLDTFCYTVYQRSIAQSKTNGCGRMLSINISDEEFKSMYSQKYPQIEIACYNSPQSIVVAGNESILNEISKELKEKEIFTTMLGSLSSFHTSSQQCTKDSILQLNIESNQPKVPIFSTVTTNLFNESNRFNSQYVYDNIIKPVKFTQTISNIYKHIESNQLNNEIVFIEIAPHPTLLFYIKQMVPSSLNESVSVYSALHKKKNDVEEFQQTISNLYCQNGYNINFKCQFNNKKSNQSINLPLYQWDEELYFTQAQTLEQHRKEGPPIDHLGTSNSYNSPFNNSYRTSIDIKNKPFLYLKGHMVKGKYYFPGCGYIDNIIQLYKNQDIFISFIEFKTPLILIEGINQYLQTNIQQTGKSEYRAQFHFKDQKSNEWIQSSNANFQLLDHGNDIPPKYNIKEIIENKCNLSKLTKNELYTHIKSKTGLNYTGVFQGVTECYIGGDCTLSVVSLESQTNSFLNIPILDTCLHGMIGLSNDQCQIVFDKAIGFKYYSSNIPANLKDYKDSVYVYSHLKSKSVDSFFGSIIVMLSDGSVLYEIEEVVCKSLIPIKDSLKIEYPNDELYKVHLQSKDSPIPTPSSFKSIIYENDFFHSALNIPEDLFKYISTLFYKDIIKRCPEININKINSHSVNEIISSFSKISKHERLFRFVFETIKENGILNSLEENDDAYFEFNEVIIKSSRIISKLLFPLESDNDNEDLPQSLFQNGLMDKIYKCRYLRKKNQMISHVIKHSIKEIINNNIIIRILEFGGGTASLSVEVIEEIIALLQENPNYQVEIEYTWSDISPAFIADAKNKINKIINDAAITNGFNVIYRPLKIDESLIETQSINPSYYDFVIMSNVLHVVKNIKQAVEQMYQLLTPNGQLLFLEPPYKSVLNDSIVGSFEQWWSFTDTDIRKDRCSMSQQSWCQLLKTCNFKDIAMSKECIFVGIVIHAQKPPISLLNSQPKRDNIIIYGGGNPIFVENIKLYSNSKSLIQIETIQEFNQLLSQSTITNDSIIYFIKTLETLSLDNFKQITLEYIEINRKLLQINSLCKHVLIVSDSRKTNYLASSVVGAARYFDEFQQLKLNTLDFDYDSTQNYINSNNKDMVQFINILTDSKTNVHKEMIIINNKVYYEIVQKEKNLKLKYNSESFENQNNLMCSLSPNLEYQLQSKQIKLRDNQVEVKTIATGINYKDYLNFSGSNSNGDDNTGLPQFGYEFSGIITRVGNNVKDYKVGDNVFGLSNSCTSSHIVTNYKKIQIKPSNLSHNEASSIPIDYLTSFMSLFNIGSLNIEDNESILIHLGSDGFGLSTFEILKWKGFNSNLFVTVNSYETKRYLQDNYGDFITGIYSNTDKSYVTEINKKLIKLGSKKKGVDLILNTLPSDFMDSNFKLLAKYGRIIDLTSNHLNQSEFLKNINFKYNHGYHNFELSLIQKNKIHKCLYEISNAFENGELKTIPIKEFTNLNIKDAIKYITNNKIEKITVSHDHEIYSDIIYRSLDEKEFSILKSNYQINSNNLGKNILVTGQSGIILEILKWIIKYSNINTIENVIILSRSSLKWELELLINETKLSNNNIKFHFKSVDIGDSEQVDNAINEILNENQQITNIDSIYHFAFQQITCKVQEINMKHLDISHGAKSMGAINLHNQSIKRNWKLINFVMASSAISLIGSTDLCTYVCANALLDSFSKYRESLGLPSTCICLGAIESTGFVSKNESVSVFLDGGGFHPTPINQVLGLLDLQIQNAGKFTNSMLSNFKPSKFKNNQQTSLFLKFDYLMNLKNNSEETKIENTGNKNIDELFIEKVSELFSMDESKINKNLRLIDYGADSLIIVQLKNWIDKEIGINLITIQQLQNNTISTSMKMILNSLMKNNQNIDDNNKDLPSNRIDYWKNEMKFEESIKPISNEIQSRNNSEKIILLTGTTGFLGGFLLFNMVRLDSCKLIYCLIRNKSKSNNPLDEIINNLKYHQLYEKLNQSQISKIIPIIGDLSMNKLGLSNDDYETISKNVNLIINPGADINQKSSYQDCKLVNVNGVKEIIKLSLSSLKQRIPIVNFSSFSVFFNQSLDKNFDESVLPSIDNIDNLPTEYMKSKVVGEYILLEASKKYNIPSILIRPPSIFLNPETGIGHISDFSLLSIQSCYELGYYPNQFENDFILINTITWLSNNITNIIMNDNCWTDSKMNIYNVHGKQIQSSLIIKPLEKHFNCKHINTNDWIDMVNNSNKKSCIKLKSFHSLDIILKSENNRYKPNENQSISLSTKSLLESMGSYNTDLEITDKMIISHINQIFNLNETI.

Residues 11–442 enclose the Ketosynthase family 3 (KS3) domain; it reads EKGVAIVGIG…GSNCCLLISE (432 aa). Residues Cys181, His323, and His362 each act as for beta-ketoacyl synthase activity in the active site. The segment at 635-668 is acyl/malonyl transferase; it reads GVNPSFILGHSLGEISASYCSGMIDLDTFCYTVY. The active-site For acyl/malonyl transferase activity is the Ser645. Positions 925-1047 are N-terminal hotdog fold; the sequence is IDHLGTSNSY…ANFQLLDHGN (123 aa). The region spanning 925 to 1209 is the PKS/mFAS DH domain; sequence IDHLGTSNSY…CKSLIPIKDS (285 aa). Catalysis depends on His959, which acts as the Proton acceptor; for dehydratase activity. Positions 1064 to 1209 are C-terminal hotdog fold; it reads NLSKLTKNEL…CKSLIPIKDS (146 aa). The Proton donor; for dehydratase activity role is filled by Asp1122. Residues 2293–2313 traverse the membrane as a helical segment; the sequence is LINFVMASSAISLIGSTDLCT. In terms of domain architecture, Carrier spans 2429 to 2506; the sequence is TGNKNIDELF…TSMKMILNSL (78 aa). Ser2466 is modified (O-(pantetheine 4'-phosphoryl)serine). The helical transmembrane segment at 2553-2573 threads the bilayer; that stretch reads KIILLTGTTGFLGGFLLFNMV.

Requires pantetheine 4'-phosphate as cofactor.

The protein resides in the membrane. Probable polyketide synthase. This is Probable polyketide synthase 9/36 (pks9) from Dictyostelium discoideum (Social amoeba).